The following is a 97-amino-acid chain: YcgL domain-containing protein Avin_32960 (97 aa).

Residues 3–87 (CICSIYKSPR…PEEEYVEHLP (85 aa)) enclose the YcgL domain.

This Azotobacter vinelandii (strain DJ / ATCC BAA-1303) protein is YcgL domain-containing protein Avin_32960.